The sequence spans 436 residues: 3-ketoacyl-CoA thiolase (436 aa).

The Acyl-thioester intermediate role is filled by Cys-99. Active-site proton acceptor residues include His-392 and Cys-422.

Belongs to the thiolase-like superfamily. Thiolase family. In terms of assembly, heterotetramer of two alpha chains (FadJ) and two beta chains (FadI).

It localises to the cytoplasm. The enzyme catalyses an acyl-CoA + acetyl-CoA = a 3-oxoacyl-CoA + CoA. It functions in the pathway lipid metabolism; fatty acid beta-oxidation. In terms of biological role, catalyzes the final step of fatty acid oxidation in which acetyl-CoA is released and the CoA ester of a fatty acid two carbons shorter is formed. The sequence is that of 3-ketoacyl-CoA thiolase from Salmonella typhimurium (strain LT2 / SGSC1412 / ATCC 700720).